Consider the following 475-residue polypeptide: GTPase Der (475 aa).

EngA-type G domains are found at residues 2–166 and 213–386; these read LRIA…NIPE and LKIA…ETVS. Residues 8–15, 55–59, 118–121, 219–226, 266–270, and 331–334 contribute to the GTP site; these read GRPNVGKS, DTGGV, NKAD, DTAGL, and NKWD. The 85-residue stretch at 387–471 folds into the KH-like domain; the sequence is RKVPTPVVNK…PFDLEIKEKA (85 aa).

It belongs to the TRAFAC class TrmE-Era-EngA-EngB-Septin-like GTPase superfamily. EngA (Der) GTPase family. Associates with the 50S ribosomal subunit.

In terms of biological role, GTPase that plays an essential role in the late steps of ribosome biogenesis. The protein is GTPase Der of Chlamydia felis (strain Fe/C-56) (Chlamydophila felis).